We begin with the raw amino-acid sequence, 1078 residues long: Phosphatidylinositol-3,5-bisphosphate 3-phosphatase MTMR4 (1078 aa).

Residues 154-571 (DHVKSRFQIE…RALQLWTAVY (418 aa)) form the Myotubularin phosphatase domain. Residues 267 to 290 (RMPNGNPSNKGNNDGSDNSDTDFD) are disordered. Residues 270–282 (NGNPSNKGNNDGS) show a composition bias toward low complexity. Residues Asn321, Asn346, and Ile347 each coordinate a 1,2-diacyl-sn-glycero-3-phospho-(1D-myo-inositol-3,5-bisphosphate). Asn321, Asn346, and Ile347 together coordinate a 1,2-diacyl-sn-glycero-3-phospho-(1D-myo-inositol-3-phosphate). Cys408 (phosphocysteine intermediate) is an active-site residue. A 1,2-diacyl-sn-glycero-3-phospho-(1D-myo-inositol-3,5-bisphosphate)-binding residues include Ser409, Asp410, Gly411, Trp412, Asp413, Arg414, Lys450, and Arg454. Residues Ser409, Asp410, Gly411, Trp412, Asp413, and Arg414 each contribute to the a 1,2-diacyl-sn-glycero-3-phospho-(1D-myo-inositol-3-phosphate) site. A 1,2-diacyl-sn-glycero-3-phospho-(1D-myo-inositol-3-phosphate) is bound at residue Arg454. Polar residues predominate over residues 629–648 (SSDPNLNNHQGNLESCSSSK). A disordered region spans residues 629–694 (SSDPNLNNHQ…SGSATNQNNN (66 aa)). A coiled-coil region spans residues 904–935 (VQQRLRQMEASYKQEVDLLRRQVWELQLQLEI). The interval 960-982 (DGSDMDDLYSDKSEDRLSEASWE) is disordered. The segment covering 968–982 (YSDKSEDRLSEASWE) has biased composition (basic and acidic residues). Residues 997-1057 (DHMASHCFNC…VCNTCYDHIQ (61 aa)) form an FYVE-type zinc finger. Zn(2+) contacts are provided by Cys1003, Cys1006, Cys1019, Cys1022, Cys1027, Cys1030, Cys1049, and Cys1052.

It belongs to the protein-tyrosine phosphatase family. Non-receptor class myotubularin subfamily. As to quaternary structure, homooligomeric.

It is found in the early endosome membrane. Its subcellular location is the recycling endosome membrane. The protein localises to the late endosome membrane. It localises to the cytoplasmic vesicle. The protein resides in the phagosome membrane. The catalysed reaction is a 1,2-diacyl-sn-glycero-3-phospho-(1D-myo-inositol-3-phosphate) + H2O = a 1,2-diacyl-sn-glycero-3-phospho-(1D-myo-inositol) + phosphate. It catalyses the reaction a 1,2-diacyl-sn-glycero-3-phospho-(1D-myo-inositol-3,5-bisphosphate) + H2O = a 1,2-diacyl-sn-glycero-3-phospho-(1D-myo-inositol-5-phosphate) + phosphate. The enzyme catalyses 1,2-dioctanoyl-sn-glycero-3-phospho-(1-D-myo-inositol-3-phosphate) + H2O = 1,2-dioctanoyl-sn-glycero-3-phospho-(1D-myo-inositol) + phosphate. It carries out the reaction 1,2-dioctanoyl-sn-glycero-3-phospho-(1D-myo-inositol-3,5-bisphosphate) + H2O = 1,2-dioctanoyl-sn-glycero-3-phospho-(1D-myo-inositol-5-phosphate) + phosphate. In terms of biological role, lipid phosphatase that specifically dephosphorylates the D-3 position of phosphatidylinositol 3-phosphate and phosphatidylinositol 3,5-bisphosphate, generating phosphatidylinositol and phosphatidylinositol 5-phosphate. Decreases the levels of phosphatidylinositol 3-phosphate, a phospholipid found in cell membranes where it acts as key regulator of both cell signaling and intracellular membrane traffic, in a subset of endosomal membranes to negatively regulate both endocytic recycling and trafficking and/or maturation of endosomes toward lysosomes. Through phosphatidylinositol 3-phosphate turnover in phagosome membranes regulates phagocytosis and phagosome maturation. By decreasing phosphatidylinositol 3-monophosphate (PI3P) levels in immune cells it can also regulate the innate immune response. Beside its lipid phosphatase activity, can also function as a molecular adapter to regulate midbody abscission during mitotic cytokinesis. Can also negatively regulate TGF-beta and BMP signaling through Smad proteins dephosphorylation and retention in endosomes. This chain is Phosphatidylinositol-3,5-bisphosphate 3-phosphatase MTMR4 (mtmr4), found in Xenopus laevis (African clawed frog).